The primary structure comprises 455 residues: 3-isopropylmalate dehydratase large subunit (455 aa).

[4Fe-4S] cluster-binding residues include Cys-337, Cys-397, and Cys-400.

This sequence belongs to the aconitase/IPM isomerase family. LeuC type 1 subfamily. In terms of assembly, heterodimer of LeuC and LeuD. The cofactor is [4Fe-4S] cluster.

It carries out the reaction (2R,3S)-3-isopropylmalate = (2S)-2-isopropylmalate. It functions in the pathway amino-acid biosynthesis; L-leucine biosynthesis; L-leucine from 3-methyl-2-oxobutanoate: step 2/4. In terms of biological role, catalyzes the isomerization between 2-isopropylmalate and 3-isopropylmalate, via the formation of 2-isopropylmaleate. The chain is 3-isopropylmalate dehydratase large subunit from Leuconostoc citreum (strain KM20).